A 394-amino-acid polypeptide reads, in one-letter code: Protein BUR2 (394 aa).

2 disordered regions span residues 1–32 (MVLSASEEIANSQPSGNGKTSLDIKQNEGNPQ) and 372–394 (MSERSIKRPSEPPAEQATKKPRF). Residues 9-32 (IANSQPSGNGKTSLDIKQNEGNPQ) show a composition bias toward polar residues. Over residues 372–381 (MSERSIKRPS) the composition is skewed to basic and acidic residues.

In terms of assembly, belongs to the BUR kinase complex.

It is found in the nucleus. In terms of biological role, component of the BUR kinase complex involved in transcription regulation. This complex phosphorylates the UBC2/RAD6 ubiquitin-conjugating enzyme (E2), leading to monoubiquitination of histone H2B and the silencing of telomeric-associated genes. Also required for histone H3 methylation. Necessary for the recovery from pheromone-induced growth arrest in the cell cycle G1 phase. The kinase activity of the complex requires the presence of BUR2. Overexpression of BUR2 interferes with mitotic chromosome segregation. The polypeptide is Protein BUR2 (BUR2) (Kluyveromyces lactis (strain ATCC 8585 / CBS 2359 / DSM 70799 / NBRC 1267 / NRRL Y-1140 / WM37) (Yeast)).